The following is a 1207-amino-acid chain: DNA-directed RNA polymerase subunit beta' (1207 aa).

Residues cysteine 60, cysteine 62, cysteine 75, and cysteine 78 each coordinate Zn(2+). Residues aspartate 449, aspartate 451, and aspartate 453 each contribute to the Mg(2+) site. Residues cysteine 822, cysteine 896, cysteine 903, and cysteine 906 each contribute to the Zn(2+) site.

It belongs to the RNA polymerase beta' chain family. The RNAP catalytic core consists of 2 alpha, 1 beta, 1 beta' and 1 omega subunit. When a sigma factor is associated with the core the holoenzyme is formed, which can initiate transcription. It depends on Mg(2+) as a cofactor. Zn(2+) serves as cofactor.

The catalysed reaction is RNA(n) + a ribonucleoside 5'-triphosphate = RNA(n+1) + diphosphate. Functionally, DNA-dependent RNA polymerase catalyzes the transcription of DNA into RNA using the four ribonucleoside triphosphates as substrates. This is DNA-directed RNA polymerase subunit beta' from Staphylococcus epidermidis (strain ATCC 35984 / DSM 28319 / BCRC 17069 / CCUG 31568 / BM 3577 / RP62A).